Consider the following 87-residue polypeptide: Large ribosomal subunit protein bL31B (87 aa).

It belongs to the bacterial ribosomal protein bL31 family. Type B subfamily. As to quaternary structure, part of the 50S ribosomal subunit.

This Corynebacterium kroppenstedtii (strain DSM 44385 / JCM 11950 / CIP 105744 / CCUG 35717) protein is Large ribosomal subunit protein bL31B.